The sequence spans 466 residues: MEGAEGNAGQPGPAERSHRSSVSSVGARAADVLVYLADDTVVPLAVENLSSISAHELHRAVREVLQLPDVALEAFALWLVSPLLEVQLKPKHQPYKLGRQWPELLLRFTNASDDDVAMDEPSLQFRRNVFFPRRRELQIHDEEVLRLLYEEAKGNVLTARYPCDLEDCEVLGGLVCRVQLGPYQPGQPAACTLREKLDSFLPAHLCKRGHGLFAAFRGRGAKTGPGEQGLLNAYRQVKEVTGNNSEREATLGSHYRAYLLKCHELPFYGCAFFHGEVDKPAQGFLHRGGRKPVTVAISLEGVHVIDNREKHVLLGLRFQELSWDHTSPEEEEPVLWLEFDGDSEGTPVNKLLRIYSKQAELMSGLIEYCIELSQAAEPTLSQESASGPHEAPSPSPPPTQRPKLRRQGSVVCSRIQHLSTIDYVEDGKGIKRVKPKRTTSFFSRQLSSSQGSYTVVQPTDDSLEQS.

N-acetylmethionine is present on M1. Positions 1 to 21 (MEGAEGNAGQPGPAERSHRSS) are disordered. S24 is modified (phosphoserine). In terms of domain architecture, FERM spans 30 to 377 (ADVLVYLADD…YCIELSQAAE (348 aa)). Residues 379 to 409 (TLSQESASGPHEAPSPSPPPTQRPKLRRQGS) form a disordered region. S384 is subject to Phosphoserine. Positions 391–400 (APSPSPPPTQ) are enriched in pro residues. S409 carries the phosphoserine modification. T420 carries the phosphothreonine modification. 2 positions are modified to phosphoserine: S440 and S447. Polar residues predominate over residues 442–460 (FSRQLSSSQGSYTVVQPTD). The interval 442-466 (FSRQLSSSQGSYTVVQPTDDSLEQS) is disordered.

In terms of assembly, interacts with iRhom proteins, including iRhom2/RHBDF2 (via cytoplasmic N-termini); this interaction leads to mutual protein stabilization. Interacts with LRP6; this interaction affects LRP6-binding to AXIN1. As to expression, widely expressed (at protein level).

The protein localises to the cytoplasm. It is found in the cytosol. The protein resides in the cell membrane. Its function is as follows. Promotes the cell surface stability of iRhom1/RHBDF1 and iRhom2/RHBDF2 and prevents their degradation via the endolysosomal pathway. By acting on iRhoms, involved in ADAM17-mediated shedding of TNF, amphiregulin/AREG, HBEGF and TGFA from the cell surface. Negatively regulates Wnt signaling, possibly by antagonizing the recruitment of AXIN1 to LRP6. This Mus musculus (Mouse) protein is FERM domain-containing protein 8 (Frmd8).